Here is a 338-residue protein sequence, read N- to C-terminus: Secretory carrier-associated membrane protein 1 (338 aa).

The segment at Met-1 to Ile-63 is disordered. An N-acetylserine modification is found at Ser-2. The residue at position 2 (Ser-2) is a Phosphoserine. The Cytoplasmic segment spans residues Ser-2–Leu-155. A Phosphothreonine modification is found at Thr-45. A helical membrane pass occupies residues Trp-156–Val-176. The Lumenal segment spans residues Asp-177–Gly-181. The chain crosses the membrane as a helical span at residues Val-182–Trp-202. The Cytoplasmic portion of the chain corresponds to Tyr-203–Arg-217. Residues Phe-218 to Gly-238 form a helical membrane-spanning segment. At Phe-239–Gly-261 the chain is on the lumenal side. The chain crosses the membrane as a helical span at residues Ile-262 to Phe-282. Residues Lys-283–Ile-338 lie on the Cytoplasmic side of the membrane.

It belongs to the SCAMP family. Interacts with SYNRG, ITSN1 and SLC9A7.

It is found in the golgi apparatus. Its subcellular location is the trans-Golgi network membrane. The protein localises to the recycling endosome membrane. Functionally, functions in post-Golgi recycling pathways. Acts as a recycling carrier to the cell surface. The chain is Secretory carrier-associated membrane protein 1 (SCAMP1) from Sus scrofa (Pig).